A 508-amino-acid chain; its full sequence is Probable cytosol aminopeptidase (508 aa).

Lys-274 and Asp-279 together coordinate Mn(2+). Lys-286 is a catalytic residue. The Mn(2+) site is built by Asp-297, Asp-356, and Glu-358. Arg-360 is a catalytic residue.

The protein belongs to the peptidase M17 family. Requires Mn(2+) as cofactor.

Its subcellular location is the cytoplasm. It carries out the reaction Release of an N-terminal amino acid, Xaa-|-Yaa-, in which Xaa is preferably Leu, but may be other amino acids including Pro although not Arg or Lys, and Yaa may be Pro. Amino acid amides and methyl esters are also readily hydrolyzed, but rates on arylamides are exceedingly low.. The catalysed reaction is Release of an N-terminal amino acid, preferentially leucine, but not glutamic or aspartic acids.. Its function is as follows. Presumably involved in the processing and regular turnover of intracellular proteins. Catalyzes the removal of unsubstituted N-terminal amino acids from various peptides. The chain is Probable cytosol aminopeptidase from Paraburkholderia phytofirmans (strain DSM 17436 / LMG 22146 / PsJN) (Burkholderia phytofirmans).